Consider the following 61-residue polypeptide: Bowman-Birk type proteinase inhibitor B5 (61 aa).

Intrachain disulfides connect Cys-5–Cys-60, Cys-6–Cys-22, Cys-9–Cys-56, Cys-12–Cys-20, Cys-29–Cys-36, and Cys-33–Cys-48.

The protein belongs to the Bowman-Birk serine protease inhibitor family. Expressed in bulb (at protein level).

Functionally, serine protease inhibitor. Inhibits trypsin (Ki = 41 nM) and weakly inhibits chymotrypsin (Ki = 410 nM). Does not inhibit bacterial subtilisin. This Hyacinthus orientalis (Common hyacinth) protein is Bowman-Birk type proteinase inhibitor B5.